The chain runs to 333 residues: Quinolinate synthase (333 aa).

Iminosuccinate-binding residues include histidine 41 and serine 58. Cysteine 103 is a binding site for [4Fe-4S] cluster. Residues 129–131 (YIN) and serine 146 contribute to the iminosuccinate site. Cysteine 189 provides a ligand contact to [4Fe-4S] cluster. Residues 215 to 217 (HPE) and threonine 232 each bind iminosuccinate. Residue cysteine 282 coordinates [4Fe-4S] cluster.

Belongs to the quinolinate synthase family. Type 2 subfamily. [4Fe-4S] cluster serves as cofactor.

The protein resides in the cytoplasm. It carries out the reaction iminosuccinate + dihydroxyacetone phosphate = quinolinate + phosphate + 2 H2O + H(+). Its pathway is cofactor biosynthesis; NAD(+) biosynthesis; quinolinate from iminoaspartate: step 1/1. Catalyzes the condensation of iminoaspartate with dihydroxyacetone phosphate to form quinolinate. The protein is Quinolinate synthase of Prochlorococcus marinus (strain MIT 9303).